The sequence spans 294 residues: MLRARPSHRLASAAAVVAATGAALLAGSSPAAAATCSDVDVVFARGTGETPGLGVVGGPFVRSLTGELSDRTVTSHAVDYAASSSQASAGPGATAMSAHVREVAAACPSTRFVLGGYSQGATVTDIALGIRTGTTTGTPVPAELAGRVAAVVVFGNPLGLSGRTIATASSTYGPKSKDYCNSSDSVCGSAPKTGTGGHLSYASNGSTTDGARFAAGLVRAAGTPTTPTPTPTPTPVPTTCVRDSTRDHVAADRAVSLYGRAYARGSRDSLGATSSYNVVSLQQVEGGWRLVTAC.

A signal peptide spans 1-33 (MLRARPSHRLASAAAVVAATGAALLAGSSPAAA). The cysteines at positions 36 and 107 are disulfide-linked. Catalysis depends on Ser118, which acts as the Nucleophile. Cys180 and Cys187 are disulfide-bonded. Asp184 is a catalytic residue. His198 serves as the catalytic Proton donor/acceptor. Residues 222–241 (GTPTTPTPTPTPTPVPTTCV) are disordered. Positions 226-236 (TPTPTPTPTPV) are enriched in pro residues. The tract at residues 240-294 (CVRDSTRDHVAADRAVSLYGRAYARGSRDSLGATSSYNVVSLQQVEGGWRLVTAC) is may be involved in substrate binding.

The protein belongs to the cutinase family.

The protein localises to the secreted. The enzyme catalyses cutin + H2O = cutin monomers.. It carries out the reaction a tetradecanoate ester + H2O = an aliphatic alcohol + tetradecanoate + H(+). It catalyses the reaction hexadecanoate ester + H2O = an aliphatic alcohol + hexadecanoate + H(+). The catalysed reaction is a butanoate ester + H2O = an aliphatic alcohol + butanoate + H(+). The enzyme catalyses an octanoate ester + H2O = an aliphatic alcohol + octanoate + H(+). Functionally, catalyzes the hydrolysis of cutin, a polyester that forms the structure of plant cuticle. Shows esterase activity towards p-nitrophenol-linked aliphatic esters (pNP-aliphatic esters). Can depolymerize synthetic polyesters such as poly(epsilon-caprolactone) (PCL) and poly(1,3-propylene adipate) (PPA). Exhibits some activity on poly(lactic acid) (PLA). Can bind but not hydrolyze poly(hydroxybutyrate) (PHB). The protein is Cutinase of Kineococcus radiotolerans (strain ATCC BAA-149 / DSM 14245 / SRS30216).